Consider the following 242-residue polypeptide: Agamous-like MADS-box protein AGL8 (242 aa).

An MADS-box domain is found at arginine 3–tyrosine 57. The 91-residue stretch at serine 88 to lysine 178 folds into the K-box domain. A coiled-coil region spans residues glutamate 89 to lysine 178.

In terms of assembly, homodimer capable of binding to CArG-box sequences. As to expression, vascular tissue of cauline leaves, floral shoot apex and valves of carpels and fruits.

Its subcellular location is the nucleus. Its function is as follows. Probable transcription factor that promotes early floral meristem identity in synergy with APETALA1 and CAULIFLOWER. Is required subsequently for the transition of an inflorescence meristem into a floral meristem. Seems to be partially redundant to the function of APETALA1 and CAULIFLOWER in the up-regulation of LEAFY. Is also required for normal pattern of cell division, expansion and differentiation during morphogenesis of the silique. Probably not required for fruit elongation but instead is required to prevent ectopic activity of IND. Represses SAUR10 expression in stems and inflorescence branches. The polypeptide is Agamous-like MADS-box protein AGL8 (AGL8) (Arabidopsis thaliana (Mouse-ear cress)).